The primary structure comprises 68 residues: Putative alpha-conotoxin Qc alphaL-1 (68 aa).

Residues 1-21 (MGMRMMFTMFLLVVLATTVVS) form the signal peptide. Residues 22–49 (INLDHAFDGRNAAANNKATDLMARTVRR) constitute a propeptide that is removed on maturation. An intrachain disulfide couples cysteine 51 to cysteine 64.

The protein belongs to the conotoxin A superfamily. In terms of tissue distribution, expressed by the venom duct.

It localises to the secreted. Functionally, alpha-conotoxins act on postsynaptic membranes, they bind to the nicotinic acetylcholine receptors (nAChR) and thus inhibit them. The protein is Putative alpha-conotoxin Qc alphaL-1 of Conus quercinus (Oak cone).